Reading from the N-terminus, the 211-residue chain is NADH-quinone oxidoreductase subunit A (211 aa).

3 consecutive transmembrane segments (helical) span residues 7 to 27, 61 to 81, and 88 to 108; these read WSAL…LVVP, FYLV…LYAY, and VGWI…IGLI.

It belongs to the complex I subunit 3 family. NDH-1 is composed of 14 different subunits. Subunits NuoA, H, J, K, L, M, N constitute the membrane sector of the complex.

The protein localises to the cell inner membrane. It catalyses the reaction a quinone + NADH + 5 H(+)(in) = a quinol + NAD(+) + 4 H(+)(out). In terms of biological role, NDH-1 shuttles electrons from NADH, via FMN and iron-sulfur (Fe-S) centers, to quinones in the respiratory chain. The immediate electron acceptor for the enzyme in this species is believed to be ubiquinone. Couples the redox reaction to proton translocation (for every two electrons transferred, four hydrogen ions are translocated across the cytoplasmic membrane), and thus conserves the redox energy in a proton gradient. The protein is NADH-quinone oxidoreductase subunit A of Psychrobacter sp. (strain PRwf-1).